The chain runs to 112 residues: Protein ECM19 (112 aa).

A helical transmembrane segment spans residues 35 to 57 (NTLDMVTIGIACLVGVYTGTRFF). The tract at residues 82-112 (EDGNLLKVTPSLSSTPAAPPTPPTPPTPPQQ) is disordered. Residues 98-112 (AAPPTPPTPPTPPQQ) are compositionally biased toward pro residues.

The protein localises to the mitochondrion membrane. Functionally, may be involved in cell wall organization and biogenesis. This Saccharomyces cerevisiae (strain ATCC 204508 / S288c) (Baker's yeast) protein is Protein ECM19 (ECM19).